Here is a 689-residue protein sequence, read N- to C-terminus: MAAATASPRSLLVLLQVVVLALAQIRGPPGERGPPGPPGPPGVPGSDGIDGDNGPPGKAGPPGPKGEPGKAGPDGPDGKPGIDGLTGAKGEPGPMGIPGVKGQPGLPGPPGLPGPGFAGPPGPPGPVGLPGEIGIRGPKGDPGPDGPSGPPGPPGKPGRPGTIQGLEGSADFLCPTNCPPGMKGPPGLQGVKGHAGKRGILGDPGHQGKPGPKGDVGASGEQGIPGPPGPQGIRGYPGMAGPKGETGPHGYKGMVGAIGATGPPGEEGPRGPPGRAGEKGDEGSPGIRGPQGITGPKGATGPPGINGKDGTPGTPGMKGSAGQAGQPGSPGHQGLAGVPGQPGTKGGPGDQGEPGPQGLPGFSGPPGKEGEPGPRGEIGPQGIMGQKGDQGERGPVGQPGPQGRQGPKGEQGPPGIPGPQGLPGVKGDKGSPGKTGPRGKVGDPGVAGLPGEKGEKGESGEPGPKGQQGVRGEPGYPGPSGDAGAPGVQGYPGPPGPRGLAGNRGVPGQPGRQGVEGRDATDQHIVDVALKMLQEQLAEVAVSAKREALGAVGMMGPPGPPGPPGYPGKQGPHGHPGPRGVPGIVGAVGQIGNTGPKGKRGEKGDPGEVGRGHPGMPGPPGIPGLPGRPGQAINGKDGDRGSPGAPGEAGRPGLPGPVGLPGFCEPAACLGASAYASARLTEPGSIKGP.

An N-terminal signal peptide occupies residues 1-23 (MAAATASPRSLLVLLQVVVLALA). A disordered region spans residues 26-518 (RGPPGERGPP…QPGRQGVEGR (493 aa)). The segment at 27–163 (GPPGERGPPG…PGKPGRPGTI (137 aa)) is triple-helical region 4 (COL4). A compositionally biased stretch (pro residues) spans 31 to 43 (ERGPPGPPGPPGV). Low complexity predominate over residues 44–56 (PGSDGIDGDNGPP). Composition is skewed to pro residues over residues 106 to 127 (LPGP…PGPV) and 144 to 157 (PDGP…PGKP). A 4-hydroxyproline modification is found at Pro160. The interval 164–180 (QGLEGSADFLCPTNCPP) is nonhelical region 4 (NC4). Residue Ser169 is glycosylated (O-linked (Xyl...) (glycosaminoglycan) serine). The interval 181-519 (GMKGPPGLQG…PGRQGVEGRD (339 aa)) is triple-helical region 3 (COL3). Lys183 bears the 5-hydroxylysine mark. A glycan (O-linked (Gal...) hydroxylysine) is linked at Lys183. Positions 343 to 352 (GTKGGPGDQG) are enriched in gly residues. Low complexity-rich tracts occupy residues 353–366 (EPGP…SGPP) and 393–413 (RGPV…EQGP). The segment at 520 to 549 (ATDQHIVDVALKMLQEQLAEVAVSAKREAL) is nonhelical region 3 (NC3). The segment at 550-632 (GAVGMMGPPG…PGLPGRPGQA (83 aa)) is triple-helical region 2 (COL2). Positions 554–663 (MMGPPGPPGP…LPGPVGLPGF (110 aa)) are disordered. Over residues 557 to 566 (PPGPPGPPGY) the composition is skewed to pro residues. The span at 599–611 (KRGEKGDPGEVGR) shows a compositional bias: basic and acidic residues. A nonhelical region 2 (NC2) region spans residues 633–634 (IN). The interval 635 to 664 (GKDGDRGSPGAPGEAGRPGLPGPVGLPGFC) is triple-helical region 1 (COL1). The segment at 665-689 (EPAACLGASAYASARLTEPGSIKGP) is nonhelical region 1 (NC1).

Belongs to the fibril-associated collagens with interrupted helices (FACIT) family. Heterotrimer of an alpha 1(IX), an alpha 2(IX) and an alpha 3(IX) chain. The chains are linked to each other by interchain disulfide bonds. Trimers are also cross-linked via hydroxylysines. Post-translationally, covalently linked to the telopeptides of type II collagen by lysine-derived cross-links. In terms of processing, prolines at the third position of the tripeptide repeating unit (G-X-Y) are hydroxylated in some or all of the chains.

It localises to the secreted. The protein resides in the extracellular space. It is found in the extracellular matrix. Structural component of hyaline cartilage and vitreous of the eye. The sequence is that of Collagen alpha-2(IX) chain from Homo sapiens (Human).